The chain runs to 915 residues: Transferrin-binding protein A (915 aa).

Residues 1–24 (MQQQHLFRLNILCLSLMTALPAYA) form the signal peptide. The TonB box signature appears at 38-45 (DTIQVKAK). The TBDR plug domain occupies 51–176 (RDNEVTGLGK…LAGSVAFQTK (126 aa)). The 729-residue stretch at 187 to 915 (QWGIQSKTAY…NYTFSLEMKF (729 aa)) folds into the TBDR beta-barrel domain. The span at 526–540 (LKTPPQNNGKKTSPN) shows a compositional bias: polar residues. The tract at residues 526-545 (LKTPPQNNGKKTSPNGREKN) is disordered. The TonB C-terminal box motif lies at 898–915 (NRYAAPGRNYTFSLEMKF).

The protein belongs to the TonB-dependent receptor family. In terms of assembly, binds both human apo- and holo-transferrin (TF), via the TF C-terminus. Forms a large complex with TF and TbpB.

It localises to the cell outer membrane. Neisseria acquires iron by extracting it from serum transferrin (TF) in its human host. Acts as a TF receptor and is required for TF utilization. Binds both apo- and holo-TF, via the TF C-terminus. The chain is Transferrin-binding protein A from Neisseria gonorrhoeae.